The sequence spans 183 residues: DPHSPRFMCYLSILTFFMPMLVTGDNSLQLFLGWEGVGLASYLLIHFWFTRLQADKAATKAMPVNRVGDFGLAPGISGRFTLFQTVDFSTIFARASAPRNSWISCNMRLNAITLICILLLIGAVGKSAQIGSHTWSPDAMEGPTPVSALIHAATMVTAGVFMIARCSPLFEYPPTALIVITSA.

Transmembrane regions (helical) follow at residues 7-27 (FMCY…GDNS), 30-50 (LFLG…FWFT), 111-131 (AITL…AQIG), and 144-164 (TPVS…FMIA).

The protein belongs to the complex I subunit 5 family.

Its subcellular location is the mitochondrion inner membrane. The enzyme catalyses a ubiquinone + NADH + 5 H(+)(in) = a ubiquinol + NAD(+) + 4 H(+)(out). In terms of biological role, core subunit of the mitochondrial membrane respiratory chain NADH dehydrogenase (Complex I) that is believed to belong to the minimal assembly required for catalysis. Complex I functions in the transfer of electrons from NADH to the respiratory chain. The immediate electron acceptor for the enzyme is believed to be ubiquinone. In Pisum sativum (Garden pea), this protein is NADH-ubiquinone oxidoreductase chain 5 (NDH5).